A 101-amino-acid polypeptide reads, in one-letter code: Small ribosomal subunit protein uS14 (101 aa).

This sequence belongs to the universal ribosomal protein uS14 family. In terms of assembly, part of the 30S ribosomal subunit. Contacts proteins S3 and S10.

Binds 16S rRNA, required for the assembly of 30S particles and may also be responsible for determining the conformation of the 16S rRNA at the A site. In Sodalis glossinidius (strain morsitans), this protein is Small ribosomal subunit protein uS14.